Consider the following 388-residue polypeptide: S-adenosylmethionine synthase (388 aa).

His-16 contributes to the ATP binding site. A Mg(2+)-binding site is contributed by Asp-18. Glu-44 contributes to the K(+) binding site. Glu-57 and Gln-100 together coordinate L-methionine. A flexible loop region spans residues 100–110; it reads QSADIAQGVNE. ATP-binding positions include 167 to 169, 233 to 234, Asp-242, 248 to 249, Ala-265, and Lys-269; these read DAK, RF, and RK. Asp-242 contributes to the L-methionine binding site. L-methionine is bound at residue Lys-273.

It belongs to the AdoMet synthase family. Homotetramer; dimer of dimers. Requires Mg(2+) as cofactor. K(+) serves as cofactor.

The protein resides in the cytoplasm. It catalyses the reaction L-methionine + ATP + H2O = S-adenosyl-L-methionine + phosphate + diphosphate. It functions in the pathway amino-acid biosynthesis; S-adenosyl-L-methionine biosynthesis; S-adenosyl-L-methionine from L-methionine: step 1/1. Catalyzes the formation of S-adenosylmethionine (AdoMet) from methionine and ATP. The overall synthetic reaction is composed of two sequential steps, AdoMet formation and the subsequent tripolyphosphate hydrolysis which occurs prior to release of AdoMet from the enzyme. The protein is S-adenosylmethionine synthase of Aromatoleum aromaticum (strain DSM 19018 / LMG 30748 / EbN1) (Azoarcus sp. (strain EbN1)).